The following is a 316-amino-acid chain: D-alanine--D-alanine ligase (316 aa).

One can recognise an ATP-grasp domain in the interval 104-303 (KRVWLQHGLP…YADLCVAILA (200 aa)). Residue 130-185 (PDRLGLPLILKPPHEGSTVGITKVAGYSDMKAAYELAARFDAEVLAEQFITGRELT) coordinates ATP. Residues D257, E270, and N272 each coordinate Mg(2+).

This sequence belongs to the D-alanine--D-alanine ligase family. Mg(2+) serves as cofactor. Requires Mn(2+) as cofactor.

It is found in the cytoplasm. The catalysed reaction is 2 D-alanine + ATP = D-alanyl-D-alanine + ADP + phosphate + H(+). It functions in the pathway cell wall biogenesis; peptidoglycan biosynthesis. In terms of biological role, cell wall formation. This is D-alanine--D-alanine ligase from Bordetella bronchiseptica (strain ATCC BAA-588 / NCTC 13252 / RB50) (Alcaligenes bronchisepticus).